Reading from the N-terminus, the 304-residue chain is UDP-N-acetylenolpyruvoylglucosamine reductase (304 aa).

Residues 33-198 (RVGGPVDILL…ITATFCFESG (166 aa)) form the FAD-binding PCMH-type domain. Residue R177 is part of the active site. S227 (proton donor) is an active-site residue. E297 is an active-site residue.

It belongs to the MurB family. FAD is required as a cofactor.

It localises to the cytoplasm. It catalyses the reaction UDP-N-acetyl-alpha-D-muramate + NADP(+) = UDP-N-acetyl-3-O-(1-carboxyvinyl)-alpha-D-glucosamine + NADPH + H(+). Its pathway is cell wall biogenesis; peptidoglycan biosynthesis. In terms of biological role, cell wall formation. This Clostridium botulinum (strain Alaska E43 / Type E3) protein is UDP-N-acetylenolpyruvoylglucosamine reductase.